A 408-amino-acid polypeptide reads, in one-letter code: Innexin-12 (408 aa).

Residues 29–49 (TIGLVLASAFITGWSFVGSPI) traverse the membrane as a helical segment. Residue asparagine 99 is glycosylated (N-linked (GlcNAc...) asparagine). Transmembrane regions (helical) follow at residues 113–133 (QWVPFILALQAMLFYFPVVIW), 197–217 (VITSYLFMKALFLINVLFQFV), and 284–304 (IFVALWWWLCFLTVVTITNTI).

The protein belongs to the pannexin family.

Its subcellular location is the cell membrane. The protein resides in the cell junction. The protein localises to the gap junction. Structural component of the gap junctions. Plays a role in oocyte directional transit in the spermatheca during ovulation by facilitating the directional propagation of the calcium signal in the spermatheca. Plays a role in male tail tip morphogenesis. This chain is Innexin-12, found in Caenorhabditis elegans.